The primary structure comprises 230 residues: Cell division ATP-binding protein FtsE (230 aa).

The ABC transporter domain maps to 3 to 228 (ITLDHVTKQY…RDEQRGVYGM (226 aa)). 37 to 44 (GPSGSGKS) lines the ATP pocket.

This sequence belongs to the ABC transporter superfamily. As to quaternary structure, homodimer. Forms a membrane-associated complex with FtsX.

It localises to the cell membrane. Its function is as follows. Part of the ABC transporter FtsEX involved in cellular division. Has ATPase activity. The protein is Cell division ATP-binding protein FtsE of Mycobacterium tuberculosis (strain ATCC 25618 / H37Rv).